Consider the following 706-residue polypeptide: Polyribonucleotide nucleotidyltransferase (706 aa).

Positions 486 and 492 each coordinate Mg(2+). Residues 553-612 (PRIHTIKISTDKIKDVIGKGGSVIRALTEETGTTIEIEDDGTVRIASTDGEKAKHAIRRI) enclose the KH domain. The region spanning 622 to 690 (GRVYQGKVTR…RQGRVRLSIK (69 aa)) is the S1 motif domain.

The protein belongs to the polyribonucleotide nucleotidyltransferase family. As to quaternary structure, component of the RNA degradosome, which is a multiprotein complex involved in RNA processing and mRNA degradation. Mg(2+) is required as a cofactor.

The protein localises to the cytoplasm. It catalyses the reaction RNA(n+1) + phosphate = RNA(n) + a ribonucleoside 5'-diphosphate. Involved in mRNA degradation. Catalyzes the phosphorolysis of single-stranded polyribonucleotides processively in the 3'- to 5'-direction. The chain is Polyribonucleotide nucleotidyltransferase from Pectobacterium atrosepticum (strain SCRI 1043 / ATCC BAA-672) (Erwinia carotovora subsp. atroseptica).